Here is a 270-residue protein sequence, read N- to C-terminus: Malonyl-[acyl-carrier protein] O-methyltransferase (270 aa).

Belongs to the methyltransferase superfamily.

It catalyses the reaction malonyl-[ACP] + S-adenosyl-L-methionine = malonyl-[ACP] methyl ester + S-adenosyl-L-homocysteine. Its pathway is cofactor biosynthesis; biotin biosynthesis. Functionally, converts the free carboxyl group of a malonyl-thioester to its methyl ester by transfer of a methyl group from S-adenosyl-L-methionine (SAM). It allows to synthesize pimeloyl-ACP via the fatty acid synthetic pathway. In Magnetococcus marinus (strain ATCC BAA-1437 / JCM 17883 / MC-1), this protein is Malonyl-[acyl-carrier protein] O-methyltransferase.